The following is an 819-amino-acid chain: LPS-assembly protein LptD (819 aa).

An N-terminal signal peptide occupies residues 1–33 (MRQMKYQFKFNPLAAAIFTLLCGGSMQSSYADA).

The protein belongs to the LptD family. As to quaternary structure, component of the lipopolysaccharide transport and assembly complex. Interacts with LptE and LptA.

The protein localises to the cell outer membrane. Its function is as follows. Together with LptE, is involved in the assembly of lipopolysaccharide (LPS) at the surface of the outer membrane. This chain is LPS-assembly protein LptD, found in Acinetobacter baylyi (strain ATCC 33305 / BD413 / ADP1).